The chain runs to 158 residues: S-ribosylhomocysteine lyase (158 aa).

Residues His-56, His-60, and Cys-125 each contribute to the Fe cation site.

The protein belongs to the LuxS family. As to quaternary structure, homodimer. Requires Fe cation as cofactor.

It catalyses the reaction S-(5-deoxy-D-ribos-5-yl)-L-homocysteine = (S)-4,5-dihydroxypentane-2,3-dione + L-homocysteine. Functionally, involved in the synthesis of autoinducer 2 (AI-2) which is secreted by bacteria and is used to communicate both the cell density and the metabolic potential of the environment. The regulation of gene expression in response to changes in cell density is called quorum sensing. Catalyzes the transformation of S-ribosylhomocysteine (RHC) to homocysteine (HC) and 4,5-dihydroxy-2,3-pentadione (DPD). In Leuconostoc citreum (strain KM20), this protein is S-ribosylhomocysteine lyase.